The primary structure comprises 47 residues: Defensin-like protein 2 (47 aa).

Disulfide bonds link Cys-3/Cys-47, Cys-14/Cys-36, Cys-20/Cys-41, and Cys-24/Cys-43.

This sequence belongs to the DEFL family.

The sequence is that of Defensin-like protein 2 from Zea mays (Maize).